Reading from the N-terminus, the 366-residue chain is Carbamoyl phosphate synthase small chain (366 aa).

A CPSase region spans residues 1–171 (MQSKRYLVLE…KTPYVSTGKD (171 aa)). Residues S47, G221, and G223 each coordinate L-glutamine. One can recognise a Glutamine amidotransferase type-1 domain in the interval 173–360 (SVVLVDFGKK…VAMMTNFKEK (188 aa)). C248 acts as the Nucleophile in catalysis. Residues L249, Q252, N290, G292, and Y293 each coordinate L-glutamine. Catalysis depends on residues H333 and E335.

The protein belongs to the CarA family. Composed of two chains; the small (or glutamine) chain promotes the hydrolysis of glutamine to ammonia, which is used by the large (or ammonia) chain to synthesize carbamoyl phosphate. Tetramer of heterodimers (alpha,beta)4.

The enzyme catalyses hydrogencarbonate + L-glutamine + 2 ATP + H2O = carbamoyl phosphate + L-glutamate + 2 ADP + phosphate + 2 H(+). The catalysed reaction is L-glutamine + H2O = L-glutamate + NH4(+). It participates in amino-acid biosynthesis; L-arginine biosynthesis; carbamoyl phosphate from bicarbonate: step 1/1. The protein operates within pyrimidine metabolism; UMP biosynthesis via de novo pathway; (S)-dihydroorotate from bicarbonate: step 1/3. Small subunit of the glutamine-dependent carbamoyl phosphate synthetase (CPSase). CPSase catalyzes the formation of carbamoyl phosphate from the ammonia moiety of glutamine, carbonate, and phosphate donated by ATP, constituting the first step of 2 biosynthetic pathways, one leading to arginine and/or urea and the other to pyrimidine nucleotides. The small subunit (glutamine amidotransferase) binds and cleaves glutamine to supply the large subunit with the substrate ammonia. This Staphylococcus aureus (strain COL) protein is Carbamoyl phosphate synthase small chain.